Reading from the N-terminus, the 259-residue chain is Keratinocyte-associated transmembrane protein 2 (259 aa).

The N-terminal stretch at methionine 1–cysteine 44 is a signal peptide. Over serine 45 to aspartate 190 the chain is Extracellular. Residues arginine 47–glutamate 155 form a disordered region. The segment covering asparagine 50–leucine 81 has biased composition (polar residues). 2 N-linked (GlcNAc...) asparagine glycosylation sites follow: asparagine 54 and asparagine 68. A compositionally biased stretch (low complexity) spans serine 82–alanine 104. A compositionally biased stretch (acidic residues) spans proline 105–leucine 122. Residue serine 165 is modified to Phosphoserine. The helical transmembrane segment at serine 191–tyrosine 211 threads the bilayer. The Cytoplasmic portion of the chain corresponds to histidine 212–phenylalanine 259. Serine 223 and serine 250 each carry phosphoserine.

The protein resides in the membrane. This Mus musculus (Mouse) protein is Keratinocyte-associated transmembrane protein 2 (Kct2).